A 165-amino-acid polypeptide reads, in one-letter code: UPF0303 protein Bphy_1660 (165 aa).

Belongs to the UPF0303 family.

This is UPF0303 protein Bphy_1660 from Paraburkholderia phymatum (strain DSM 17167 / CIP 108236 / LMG 21445 / STM815) (Burkholderia phymatum).